The sequence spans 430 residues: Glutamate-1-semialdehyde 2,1-aminomutase (430 aa).

K267 carries the post-translational modification N6-(pyridoxal phosphate)lysine.

Belongs to the class-III pyridoxal-phosphate-dependent aminotransferase family. HemL subfamily. In terms of assembly, homodimer. Pyridoxal 5'-phosphate serves as cofactor.

The protein resides in the cytoplasm. The enzyme catalyses (S)-4-amino-5-oxopentanoate = 5-aminolevulinate. The protein operates within porphyrin-containing compound metabolism; protoporphyrin-IX biosynthesis; 5-aminolevulinate from L-glutamyl-tRNA(Glu): step 2/2. This chain is Glutamate-1-semialdehyde 2,1-aminomutase, found in Cytophaga hutchinsonii (strain ATCC 33406 / DSM 1761 / CIP 103989 / NBRC 15051 / NCIMB 9469 / D465).